Consider the following 324-residue polypeptide: 4-diphosphocytidyl-2-C-methyl-D-erythritol kinase (324 aa).

Lysine 11 is an active-site residue. ATP is bound at residue 108–118 (PIGAGLAGGST). Residue aspartate 150 is part of the active site.

This sequence belongs to the GHMP kinase family. IspE subfamily.

The catalysed reaction is 4-CDP-2-C-methyl-D-erythritol + ATP = 4-CDP-2-C-methyl-D-erythritol 2-phosphate + ADP + H(+). It functions in the pathway isoprenoid biosynthesis; isopentenyl diphosphate biosynthesis via DXP pathway; isopentenyl diphosphate from 1-deoxy-D-xylulose 5-phosphate: step 3/6. Functionally, catalyzes the phosphorylation of the position 2 hydroxy group of 4-diphosphocytidyl-2C-methyl-D-erythritol. This is 4-diphosphocytidyl-2-C-methyl-D-erythritol kinase from Cyanothece sp. (strain PCC 7425 / ATCC 29141).